Consider the following 271-residue polypeptide: Cytosolic Fe-S cluster assembly factor NUBP2 (271 aa).

Methionine 1 is subject to N-acetylmethionine. Glycine 22–serine 29 contributes to the ATP binding site. 2 residues coordinate [4Fe-4S] cluster: cysteine 196 and cysteine 199.

The protein belongs to the Mrp/NBP35 ATP-binding proteins family. NUBP2/CFD1 subfamily. As to quaternary structure, heterotetramer of 2 NUBP1 and 2 NUBP2 chains. Interacts with KIFC1. Interacts with NUBP1. It depends on [4Fe-4S] cluster as a cofactor.

The protein localises to the nucleus. It is found in the cytoplasm. It localises to the cytoskeleton. The protein resides in the microtubule organizing center. Its subcellular location is the centrosome. The protein localises to the cilium axoneme. It is found in the centriole. Component of the cytosolic iron-sulfur (Fe/S) protein assembly (CIA) machinery. Required for maturation of extramitochondrial Fe-S proteins. The NUBP1-NUBP2 heterotetramer forms a Fe-S scaffold complex, mediating the de novo assembly of an Fe-S cluster and its transfer to target apoproteins. Negatively regulates cilium formation and structure. In Bos taurus (Bovine), this protein is Cytosolic Fe-S cluster assembly factor NUBP2.